A 356-amino-acid polypeptide reads, in one-letter code: 11-beta-hydroxysteroid dehydrogenase (356 aa).

The helical; Signal-anchor for type II membrane protein transmembrane segment at 10 to 30 (LVVPPAGLLMLAFAWPSLAFF) threads the bilayer. Positions 13–26 (PPAGLLMLAFAWPS) match the Proline-knob motif. NADP(+) is bound at residue 54–85 (GASSGIGEQIAYQYAKRRANLVLVARREHRLR). Ser-184 is a binding site for substrate. The active-site Proton acceptor is the Tyr-197. Residues 197 to 201 (YNAAK) and Lys-201 contribute to the NADP(+) site.

Belongs to the short-chain dehydrogenases/reductases (SDR) family. Expressed in megagametophytes (at protein level).

It localises to the lipid droplet. The protein localises to the membrane. The enzyme catalyses an 11beta-hydroxysteroid + NADP(+) = an 11-oxosteroid + NADPH + H(+). It catalyses the reaction corticosterone + NADP(+) = 11-dehydrocorticosterone + NADPH + H(+). The catalysed reaction is 17beta-estradiol + NADP(+) = estrone + NADPH + H(+). Functionally, has dehydrogenase activity against corticosterone (11 beta-hydroxysteroid) and estradiol (17 beta-hydroxysteroid) in the presence of NADP(+). May be involved in signal transduction regulated by various sterols. The protein is 11-beta-hydroxysteroid dehydrogenase of Pinus massoniana (Chinese red pine).